The following is a 104-amino-acid chain: Flagellar hook-basal body complex protein FliE (104 aa).

It belongs to the FliE family.

The protein resides in the bacterial flagellum basal body. The polypeptide is Flagellar hook-basal body complex protein FliE (Salmonella typhi).